The primary structure comprises 398 residues: Phosphoglycerate kinase (398 aa).

Substrate-binding positions include Asp-23–Asn-25, Arg-38, His-61–Lys-64, Arg-122, and Arg-155. Residues Lys-206, Gly-297, Glu-328, and Gly-354–Ser-357 contribute to the ATP site.

This sequence belongs to the phosphoglycerate kinase family. As to quaternary structure, monomer.

The protein localises to the cytoplasm. It catalyses the reaction (2R)-3-phosphoglycerate + ATP = (2R)-3-phospho-glyceroyl phosphate + ADP. The protein operates within carbohydrate degradation; glycolysis; pyruvate from D-glyceraldehyde 3-phosphate: step 2/5. The chain is Phosphoglycerate kinase from Clostridium botulinum (strain Kyoto / Type A2).